The chain runs to 273 residues: Formamidopyrimidine-DNA glycosylase (273 aa).

P2 acts as the Schiff-base intermediate with DNA in catalysis. Residue E3 is the Proton donor of the active site. K58 acts as the Proton donor; for beta-elimination activity in catalysis. DNA contacts are provided by H91 and R110. The FPG-type zinc finger occupies 238-272 (QVYGKTGQPCPRCASMIVKIKLGGRGTHLCPHCQK). Residue R262 is the Proton donor; for delta-elimination activity of the active site.

This sequence belongs to the FPG family. In terms of assembly, monomer. Requires Zn(2+) as cofactor.

The enzyme catalyses Hydrolysis of DNA containing ring-opened 7-methylguanine residues, releasing 2,6-diamino-4-hydroxy-5-(N-methyl)formamidopyrimidine.. It carries out the reaction 2'-deoxyribonucleotide-(2'-deoxyribose 5'-phosphate)-2'-deoxyribonucleotide-DNA = a 3'-end 2'-deoxyribonucleotide-(2,3-dehydro-2,3-deoxyribose 5'-phosphate)-DNA + a 5'-end 5'-phospho-2'-deoxyribonucleoside-DNA + H(+). In terms of biological role, involved in base excision repair of DNA damaged by oxidation or by mutagenic agents. Acts as a DNA glycosylase that recognizes and removes damaged bases. Has a preference for oxidized purines, such as 7,8-dihydro-8-oxoguanine (8-oxoG). Has AP (apurinic/apyrimidinic) lyase activity and introduces nicks in the DNA strand. Cleaves the DNA backbone by beta-delta elimination to generate a single-strand break at the site of the removed base with both 3'- and 5'-phosphates. This chain is Formamidopyrimidine-DNA glycosylase, found in Streptococcus thermophilus (strain CNRZ 1066).